Consider the following 309-residue polypeptide: uncharacterized protein (309 aa).

Solcar repeat units lie at residues 6–83 (SDLY…LCHS), 97–211 (LTGY…FKRL), and 216–302 (NDKA…VSLL). A run of 6 helical transmembrane segments spans residues 12–32 (ITAG…FEYL), 47–67 (IILP…VAAF), 100–120 (YNLL…IIPF), 184–204 (VQGT…QFTA), 222–242 (VITG…IDVV), and 285–305 (VGIS…LLGF).

The protein belongs to the mitochondrial carrier (TC 2.A.29) family.

The protein resides in the mitochondrion inner membrane. This is an uncharacterized protein from Saccharomyces cerevisiae (strain ATCC 204508 / S288c) (Baker's yeast).